We begin with the raw amino-acid sequence, 365 residues long: Histidinol-phosphate aminotransferase (365 aa).

The interval 1–22 is disordered; it reads MSRPVPNPGILDIAPYTPGKSP. An N6-(pyridoxal phosphate)lysine modification is found at Lys-221.

This sequence belongs to the class-II pyridoxal-phosphate-dependent aminotransferase family. Histidinol-phosphate aminotransferase subfamily. Homodimer. The cofactor is pyridoxal 5'-phosphate.

The catalysed reaction is L-histidinol phosphate + 2-oxoglutarate = 3-(imidazol-4-yl)-2-oxopropyl phosphate + L-glutamate. It functions in the pathway amino-acid biosynthesis; L-histidine biosynthesis; L-histidine from 5-phospho-alpha-D-ribose 1-diphosphate: step 7/9. The polypeptide is Histidinol-phosphate aminotransferase (Rhodopseudomonas palustris (strain BisA53)).